The primary structure comprises 567 residues: Dihydroxy-acid dehydratase (567 aa).

Cysteine 57 provides a ligand contact to [2Fe-2S] cluster. Aspartate 89 serves as a coordination point for Mg(2+). Cysteine 130 lines the [2Fe-2S] cluster pocket. Mg(2+) is bound by residues aspartate 131 and lysine 132. At lysine 132 the chain carries N6-carboxylysine. Residue cysteine 202 coordinates [2Fe-2S] cluster. Glutamate 453 lines the Mg(2+) pocket. The Proton acceptor role is filled by serine 479.

Belongs to the IlvD/Edd family. In terms of assembly, homodimer. It depends on [2Fe-2S] cluster as a cofactor. Requires Mg(2+) as cofactor.

It carries out the reaction (2R)-2,3-dihydroxy-3-methylbutanoate = 3-methyl-2-oxobutanoate + H2O. It catalyses the reaction (2R,3R)-2,3-dihydroxy-3-methylpentanoate = (S)-3-methyl-2-oxopentanoate + H2O. It participates in amino-acid biosynthesis; L-isoleucine biosynthesis; L-isoleucine from 2-oxobutanoate: step 3/4. Its pathway is amino-acid biosynthesis; L-valine biosynthesis; L-valine from pyruvate: step 3/4. In terms of biological role, functions in the biosynthesis of branched-chain amino acids. Catalyzes the dehydration of (2R,3R)-2,3-dihydroxy-3-methylpentanoate (2,3-dihydroxy-3-methylvalerate) into 2-oxo-3-methylpentanoate (2-oxo-3-methylvalerate) and of (2R)-2,3-dihydroxy-3-methylbutanoate (2,3-dihydroxyisovalerate) into 2-oxo-3-methylbutanoate (2-oxoisovalerate), the penultimate precursor to L-isoleucine and L-valine, respectively. This chain is Dihydroxy-acid dehydratase, found in Nocardioides sp. (strain ATCC BAA-499 / JS614).